An 868-amino-acid polypeptide reads, in one-letter code: Receptor-like protein 32 (868 aa).

A signal peptide spans M1 to G32. Residues V33–E815 lie on the Extracellular side of the membrane. Residues N73, N109, N141, and N165 are each glycosylated (N-linked (GlcNAc...) asparagine). 25 LRR repeats span residues L118–F142, S143–L166, Q168–N188, M189–L213, K214–L237, N239–I261, A262–S285, S287–F310, N312–N334, L335–S360, L362–D385, T389–Q412, H413–L436, K438–G459, K465–L489, R490–S515, L517–S538, R540–L560, S561–K586, Q588–F606, H607–N630, L675–L699, K700–L723, R724–L747, and Y749–R772. N-linked (GlcNAc...) asparagine glycosylation is present at N233. N-linked (GlcNAc...) asparagine glycosylation is found at N275 and N282. N-linked (GlcNAc...) asparagine glycosylation is found at N342 and N347. N477 and N503 each carry an N-linked (GlcNAc...) asparagine glycan. An N-linked (GlcNAc...) asparagine glycan is attached at N574. N613 carries N-linked (GlcNAc...) asparagine glycosylation. 4 N-linked (GlcNAc...) asparagine glycosylation sites follow: N706, N746, N754, and N774. The helical transmembrane segment at V816 to I836 threads the bilayer. Residues R837–Q868 are Cytoplasmic-facing.

It belongs to the RLP family.

It localises to the cell membrane. This is Receptor-like protein 32 from Arabidopsis thaliana (Mouse-ear cress).